The chain runs to 237 residues: Pyrimidine 5'-nucleotidase PynA (237 aa).

The active-site Nucleophile is the D9. Mg(2+)-binding residues include D9, D11, and D181. D11 (proton donor) is an active-site residue.

This sequence belongs to the HAD-like hydrolase superfamily. YjjG family. As to quaternary structure, homodimer. Mg(2+) serves as cofactor. It depends on Mn(2+) as a cofactor.

It localises to the cytoplasm. The enzyme catalyses a ribonucleoside 5'-phosphate + H2O = a ribonucleoside + phosphate. Nucleotidase that shows high phosphatase activity toward non-canonical pyrimidine nucleotides and three canonical nucleoside 5'-monophosphates (UMP, dUMP and dTMP), and no activity against IMP, UDP, GMP, AMP, UTP or pNPP. Appears to function as a house-cleaning nucleotidase in vivo, since the general nucleotidase activity of it allows it to protect cells against non-canonical pyrimidine derivatives such as 5-fluoro-2'-deoxyuridine monophosphate (5-FdUMP), and prevents the incorporation of potentially mutagenic nucleotides such as 5-bromo-2'-deoxyuridine (5-BrdU) into DNA. Is strictly specific to pyrimidine substrates with 5'-monophosphates and shows no activity against nucleoside di- and triphosphates. This chain is Pyrimidine 5'-nucleotidase PynA, found in Streptococcus pneumoniae (strain ATCC BAA-255 / R6).